The primary structure comprises 237 residues: MSDPAQEVEAPVEAAPVASSPKGKKEKAPKAPKAEKPKSDKPKKPKAAPTHPPVSEMVVNAITTLKERGGSSLIAIKKFVAAQYKVDVEKLVPFIKKFLKASVAKGTLLQAKGKGASGSFKLPPAAKKVDKPKKAPATPKPKSTKPKRVTGEKKVVKKPAAKKPEAKKATKAAKPAAKKVAAKPAAKKAAAPKPKAAAKPKKEVKPKKEAKPKKAAAKPAKKPAAKPAKKPAAKKAK.

Over residues 1-21 (MSDPAQEVEAPVEAAPVASSP) the composition is skewed to low complexity. 2 disordered regions span residues 1-56 (MSDP…PVSE) and 109-237 (LQAK…KKAK). Residues 26–42 (EKAPKAPKAEKPKSDKP) are compositionally biased toward basic and acidic residues. Positions 50-124 (THPPVSEMVV…GASGSFKLPP (75 aa)) constitute an H15 domain. A compositionally biased stretch (low complexity) spans 182 to 195 (AKPAAKKAAAPKPK). Positions 200–209 (PKKEVKPKKE) are enriched in basic and acidic residues. Positions 210–237 (AKPKKAAAKPAKKPAAKPAKKPAAKKAK) are enriched in basic residues.

The protein belongs to the histone H1/H5 family.

The protein localises to the nucleus. It is found in the chromosome. Functionally, histones H1 are necessary for the condensation of nucleosome chains into higher-order structures. The chain is Histone H1E from Chironomus tentans (Midge).